A 329-amino-acid polypeptide reads, in one-letter code: Beta-tectorin (329 aa).

A signal peptide spans 1-17 (MVAVTVYLMVILAQAFA). The ZP domain maps to 19 to 287 (PCTPNKADVI…VTCDKRKQRM (269 aa)). N-linked (GlcNAc...) asparagine glycans are attached at residues asparagine 80, asparagine 104, asparagine 116, and asparagine 145. Residues cysteine 204 and cysteine 264 are joined by a disulfide bond. Glycine 304 carries the GPI-anchor amidated glycine lipid modification. Positions 305-329 (LSRFYMLSDVIFHLLFAIGFCAILL) are cleaved as a propeptide — removed in mature form.

As to quaternary structure, may form homomeric filament after self-association or heteromeric filament after association with alpha-tectorin. The N-terminus is blocked. Post-translationally, N-glycosylated. In terms of processing, the presence of a hydrophobic C-terminus preceded by a potential cleavage site strongly suggests that tectorins are synthesized as glycosylphosphatidylinositol-linked, membrane-bound precursors. Tectorins are targeted to the apical surface of the inner ear epithelia by the lipid and proteolytically released into the extracellular compartment. Exclusively expressed in the inner ear, where it is found in basilar papilla, clear cells, supporting cells, cuboidal cells and the lagena macula.

Its subcellular location is the cell membrane. The protein resides in the secreted. The protein localises to the extracellular space. It localises to the extracellular matrix. Functionally, one of the major non-collagenous components of the tectorial membrane. The tectorial membrane is an extracellular matrix of the inner ear that covers the neuroepithelium of the cochlea and contacts the stereocilia bundles of specialized sensory hair cells. Sound induces movement of these hair cells relative to the tectorial membrane, deflects the stereocilia and leads to fluctuations in hair-cell membrane potential, transducing sound into electrical signals. This Gallus gallus (Chicken) protein is Beta-tectorin (TECTB).